Here is a 118-residue protein sequence, read N- to C-terminus: MKKIKSFGGKSLGGGKQEKLLKDFMKMQEELQKKMQEMEESFSEMEVEASVGGGAVRIVATCDRRVKEIEIDEDLKEDLETLKDLLAAAVNEIMEKIEKRREEEMSKITQQFGIPGLM.

This sequence belongs to the YbaB/EbfC family. Homodimer.

It localises to the cytoplasm. The protein resides in the nucleoid. Its function is as follows. Binds to DNA and alters its conformation. May be involved in regulation of gene expression, nucleoid organization and DNA protection. This Thermotoga neapolitana (strain ATCC 49049 / DSM 4359 / NBRC 107923 / NS-E) protein is Nucleoid-associated protein CTN_1899.